Consider the following 319-residue polypeptide: Mas-related G-protein coupled receptor member D (319 aa).

Residues 1-30 (MNYTPYSSPAPGLTISPTMDPVTWVYFSVT) lie on the Extracellular side of the membrane. A helical membrane pass occupies residues 31-51 (FLAMATCVCGIVGNSMVIWLL). The Cytoplasmic segment spans residues 52–64 (SFHRVQRSPFCTY). The chain crosses the membrane as a helical span at residues 65–85 (VLNLAVADLLFLLCMASLLSL). The Extracellular segment spans residues 86 to 92 (ETGPLLT). A helical membrane pass occupies residues 93–113 (ASTSARVYEGMKRIKYFAYTA). Topologically, residues 114–144 (GLSLLTAISTQRCLSVLFPIWYKCHRPQHLS) are cytoplasmic. A helical transmembrane segment spans residues 145–165 (GVVCGVLWALALLMNFLASFF). The Extracellular segment spans residues 166–184 (CVQFWHPDKYQCFKVDMVF). A helical transmembrane segment spans residues 185–205 (NSLILGIFMPVMVLTSAIIFI). Residues 206-220 (RMRKNSLLQRRQPRR) lie on the Cytoplasmic side of the membrane. Residues 221–241 (LYVVILTSVLVFLTCSLPLGI) traverse the membrane as a helical segment. At 242–260 (NWFLLYWVELPQAVRLLYV) the chain is on the extracellular side. A helical transmembrane segment spans residues 261 to 281 (CSSRFSSSLSSSANPVIYFLV). Residues 282–319 (GSQKSHRLQESLGAVLGRALQDEPEGRETPSTCTNDGV) are Cytoplasmic-facing.

It belongs to the G-protein coupled receptor 1 family. Mas subfamily. In terms of tissue distribution, co-expressed in the small diameter neurons with P2X3 and VR1 in dorsal root ganglia.

The protein localises to the cell membrane. Its function is as follows. May regulate nociceptor function and/or development, including the sensation or modulation of pain. Functions as a specific membrane receptor for beta-alanine. The receptor couples with G-protein G(q) and G(i). In Rattus norvegicus (Rat), this protein is Mas-related G-protein coupled receptor member D (Mrgprd).